The sequence spans 103 residues: Protein S100-A16 (103 aa).

Positions 12–47 constitute an EF-hand 1; degenerate domain; the sequence is VVVLVENFYKYVSKHSLVKNKISKSSFRKMLQKELN. The EF-hand 2 domain maps to 54-89; the sequence is GNRKAADKLIQNLDANHDGRISFDEYWTLIGGITSP. Residues Asp67, Asn69, Asp71, Arg73, and Glu78 each coordinate Ca(2+).

This sequence belongs to the S-100 family. In terms of assembly, homodimer. Interacts with TP53.

The protein localises to the nucleus. The protein resides in the nucleolus. Its subcellular location is the cytoplasm. Functionally, calcium-binding protein. Binds one calcium ion per monomer. Can promote differentiation of adipocytes (in vitro). Overexpression in preadipocytes increases their proliferation, enhances adipogenesis and reduces insulin-stimulated glucose uptake. The sequence is that of Protein S100-A16 (S100A16) from Bos taurus (Bovine).